Here is a 96-residue protein sequence, read N- to C-terminus: uncharacterized protein (96 aa).

Residues 1–28 form the signal peptide; the sequence is MNKKAIVGIFMSILMAGLVGCAGSSDAQ.

This is an uncharacterized protein from Butyrivibrio fibrisolvens.